Consider the following 98-residue polypeptide: Small ribosomal subunit protein bS20 (98 aa).

This sequence belongs to the bacterial ribosomal protein bS20 family.

Binds directly to 16S ribosomal RNA. In Parasynechococcus marenigrum (strain WH8102), this protein is Small ribosomal subunit protein bS20.